A 476-amino-acid chain; its full sequence is MSRFSGALQLTDLDDFITPSQECIKPVMIDKTKSKTGAKITVQADGYYEQSESGKQKLQKVEITLQDCLACSGCITSAEGVLITQQSQEELLKVLRENQTLKASGDNDQVRTIVFTISVQPLLSLAHRYDLGVEEASRYLAGYLRQLGADYVLCTKIADDLALLECRQEFVERFRDNAELSMLSSSCPGWVCYAEKTHGNFILPHIATTRSPQQIMGVLVKQLLAEKLGVPGSRIYHATIMPCYDKKLEASREDFYSEVNGSRDVDCVITSIEVEQMLQAEEQTLQQFEPSDIDWPWTDQQPEFPVWAHEATMSGGYAEHIFKYAAKELFSEETPNELQFKALRNRDFSEISLEKDGKTVLKFAIANGFRNIQNLVQKLKRGKGPGYHFVEVMACPSGCINGGAQVRPTTGQHVRELTQQLEELYKQLPRSNPDNSYTKQIYTDFLDGAHTDKSLELLHTSYHAVEKLNTALNIKW.

Positions 23, 68, 71, 74, 187, 243, 395, and 399 each coordinate [4Fe-4S] cluster.

The protein belongs to the NARF family.

In terms of biological role, component of the cytosolic iron-sulfur (Fe/S) protein assembly machinery. Required for maturation of extramitochondrial Fe/S proteins. The sequence is that of Probable cytosolic Fe-S cluster assembly factor GJ13047 from Drosophila virilis (Fruit fly).